The chain runs to 239 residues: Small ribosomal subunit protein uS2 (239 aa).

Belongs to the universal ribosomal protein uS2 family.

The protein is Small ribosomal subunit protein uS2 of Parasynechococcus marenigrum (strain WH8102).